We begin with the raw amino-acid sequence, 460 residues long: 2-methylcitrate synthase, mitochondrial (460 aa).

The transit peptide at methionine 1–alanine 24 directs the protein to the mitochondrion. The CoA site is built by arginine 69 and lysine 187. Histidine 264 contacts oxaloacetate. Leucine 299 is a binding site for CoA. Residue histidine 300 is part of the active site. 3 residues coordinate CoA: valine 341, glycine 343, and tyrosine 344. Oxaloacetate is bound by residues histidine 346 and arginine 355. Residue histidine 346 is part of the active site. CoA contacts are provided by threonine 395, lysine 396, and asparagine 401. Residue aspartate 403 is part of the active site. Positions 429 and 449 each coordinate oxaloacetate.

This sequence belongs to the citrate synthase family. Homodimer.

It localises to the mitochondrion matrix. It carries out the reaction propanoyl-CoA + oxaloacetate + H2O = (2S,3S)-2-methylcitrate + CoA + H(+). The catalysed reaction is oxaloacetate + acetyl-CoA + H2O = citrate + CoA + H(+). It functions in the pathway organic acid metabolism; propanoate degradation. Partially inhibited by ATP. Catalyzes the synthesis of (2S,3S)-2-methylcitrate from propionyl-CoA and oxaloacetate and also from acetyl-CoA and oxaloacetate with a greater efficiency. Also has citrate synthase activity and can substitute for the loss of citA activity. The sequence is that of 2-methylcitrate synthase, mitochondrial from Emericella nidulans (strain FGSC A4 / ATCC 38163 / CBS 112.46 / NRRL 194 / M139) (Aspergillus nidulans).